A 340-amino-acid polypeptide reads, in one-letter code: Phosphoribosylformylglycinamidine cyclo-ligase (340 aa).

It belongs to the AIR synthase family.

The protein localises to the cytoplasm. The enzyme catalyses 2-formamido-N(1)-(5-O-phospho-beta-D-ribosyl)acetamidine + ATP = 5-amino-1-(5-phospho-beta-D-ribosyl)imidazole + ADP + phosphate + H(+). It functions in the pathway purine metabolism; IMP biosynthesis via de novo pathway; 5-amino-1-(5-phospho-D-ribosyl)imidazole from N(2)-formyl-N(1)-(5-phospho-D-ribosyl)glycinamide: step 2/2. This is Phosphoribosylformylglycinamidine cyclo-ligase from Acetivibrio thermocellus (strain ATCC 27405 / DSM 1237 / JCM 9322 / NBRC 103400 / NCIMB 10682 / NRRL B-4536 / VPI 7372) (Clostridium thermocellum).